The chain runs to 306 residues: Putative S-adenosyl-L-methionine-dependent methyltransferase Mvan_1345 (306 aa).

Residues D134 and 163–164 (DL) contribute to the S-adenosyl-L-methionine site.

It belongs to the UPF0677 family.

Its function is as follows. Exhibits S-adenosyl-L-methionine-dependent methyltransferase activity. In Mycolicibacterium vanbaalenii (strain DSM 7251 / JCM 13017 / BCRC 16820 / KCTC 9966 / NRRL B-24157 / PYR-1) (Mycobacterium vanbaalenii), this protein is Putative S-adenosyl-L-methionine-dependent methyltransferase Mvan_1345.